The primary structure comprises 375 residues: Chaperone protein DnaJ (375 aa).

One can recognise a J domain in the interval 5–70 (DFYETLGVAK…QKRAAYDRYG (66 aa)). Residues 136–214 (GKTAQIRVPT…CHGQGRVTEE (79 aa)) form a CR-type zinc finger. Cys149, Cys152, Cys166, Cys169, Cys188, Cys191, Cys202, and Cys205 together coordinate Zn(2+). CXXCXGXG motif repeat units lie at residues 149-156 (CDVCSGSG), 166-173 (CGTCQGTG), 188-195 (CPTCHGRG), and 202-209 (CPKCHGQG).

Belongs to the DnaJ family. As to quaternary structure, homodimer. Zn(2+) is required as a cofactor.

It localises to the cytoplasm. Its function is as follows. Participates actively in the response to hyperosmotic and heat shock by preventing the aggregation of stress-denatured proteins and by disaggregating proteins, also in an autonomous, DnaK-independent fashion. Unfolded proteins bind initially to DnaJ; upon interaction with the DnaJ-bound protein, DnaK hydrolyzes its bound ATP, resulting in the formation of a stable complex. GrpE releases ADP from DnaK; ATP binding to DnaK triggers the release of the substrate protein, thus completing the reaction cycle. Several rounds of ATP-dependent interactions between DnaJ, DnaK and GrpE are required for fully efficient folding. Also involved, together with DnaK and GrpE, in the DNA replication of plasmids through activation of initiation proteins. The protein is Chaperone protein DnaJ of Rhizobium etli (strain ATCC 51251 / DSM 11541 / JCM 21823 / NBRC 15573 / CFN 42).